A 324-amino-acid polypeptide reads, in one-letter code: Casein kinase I (324 aa).

The Protein kinase domain occupies Y9–I278. Residues L15 to I23 and K38 contribute to the ATP site. D128 functions as the Proton acceptor in the catalytic mechanism.

Belongs to the protein kinase superfamily. CK1 Ser/Thr protein kinase family. Casein kinase I subfamily. Interacts with rhoptry protein RON3; the interaction is direct. Interacts with CK2alpha; the interaction is direct. Interacts with nucleosome assembly protein NAPL. Interacts with RAB5b. Interacts with host GAPVD1. Interacts with host SNX22. Mg(2+) is required as a cofactor.

It is found in the cytoplasm. The protein resides in the cytoplasmic vesicle. Its subcellular location is the secretory vesicle. It localises to the microneme. The protein localises to the secreted. It is found in the host cell surface. It carries out the reaction L-seryl-[protein] + ATP = O-phospho-L-seryl-[protein] + ADP + H(+). It catalyses the reaction L-threonyl-[protein] + ATP = O-phospho-L-threonyl-[protein] + ADP + H(+). Its function is as follows. Serine/threonine-protein kinase likely to be involved in many cellular processes. Phosphorylates rhoptry protein RON3, nucleosome assembly protein NAPL and DNA/RNA-binding protein ALBA4 in vitro. The polypeptide is Casein kinase I (Plasmodium falciparum (isolate Dd2)).